A 376-amino-acid chain; its full sequence is Alanine racemase (376 aa).

Lys-40 (proton acceptor; specific for D-alanine) is an active-site residue. An N6-(pyridoxal phosphate)lysine modification is found at Lys-40. Arg-138 contributes to the substrate binding site. Tyr-270 functions as the Proton acceptor; specific for L-alanine in the catalytic mechanism. Residue Met-317 coordinates substrate.

The protein belongs to the alanine racemase family. Pyridoxal 5'-phosphate is required as a cofactor.

It carries out the reaction L-alanine = D-alanine. The protein operates within amino-acid biosynthesis; D-alanine biosynthesis; D-alanine from L-alanine: step 1/1. In terms of biological role, catalyzes the interconversion of L-alanine and D-alanine. May also act on other amino acids. The protein is Alanine racemase (alr) of Lactobacillus delbrueckii subsp. bulgaricus (strain ATCC BAA-365 / Lb-18).